Here is an 81-residue protein sequence, read N- to C-terminus: QDLPHVDPATDPTAQALKYSEDAANADRAAAARPGKPPEEQFCHNCQFVLADSGEWRPCSLFPGKAVHETGWCASWTLKAG.

Cysteine 43, cysteine 46, cysteine 59, and cysteine 73 together coordinate [4Fe-4S] cluster.

It belongs to the high-potential iron-sulfur protein (HiPIP) family. Homodimer.

It is found in the periplasm. In terms of biological role, specific class of high-redox-potential 4Fe-4S ferredoxins. Functions in anaerobic electron transport in most purple and in some other photosynthetic bacteria and in at least one genus (Paracoccus) of halophilic, denitrifying bacteria. This chain is High-potential iron-sulfur protein, found in Halochromatium salexigens (Chromatium salexigens).